Consider the following 348-residue polypeptide: NADH-quinone oxidoreductase subunit H (348 aa).

Helical transmembrane passes span 10–30 (LPFLIIVGKTLLLLVVLLVLV), 82–102 (GVFLLAPFVSATLALSTWAVI), 115–135 (VGLLYILAISSLEVYGVIMGG), 161–181 (IGFVLVTVILISGSLDLTTIV), 199–219 (FLDWNWLVLFPMFIIFFISAL), 251–271 (LFFLGEYVAIVLMCALTTILF), 287–307 (IPGVIWFVLKVCFVFFWFAIV), and 322–342 (LGWKVFLPLSLAMVVITAAFL).

Belongs to the complex I subunit 1 family. In terms of assembly, NDH-1 is composed of 14 different subunits. Subunits NuoA, H, J, K, L, M, N constitute the membrane sector of the complex.

It is found in the cell inner membrane. The enzyme catalyses a quinone + NADH + 5 H(+)(in) = a quinol + NAD(+) + 4 H(+)(out). NDH-1 shuttles electrons from NADH, via FMN and iron-sulfur (Fe-S) centers, to quinones in the respiratory chain. The immediate electron acceptor for the enzyme in this species is believed to be ubiquinone. Couples the redox reaction to proton translocation (for every two electrons transferred, four hydrogen ions are translocated across the cytoplasmic membrane), and thus conserves the redox energy in a proton gradient. This subunit may bind ubiquinone. In Bartonella tribocorum (strain CIP 105476 / IBS 506), this protein is NADH-quinone oxidoreductase subunit H.